A 645-amino-acid chain; its full sequence is Threonine--tRNA ligase (645 aa).

A TGS domain is found at methionine 1–threonine 63. Positions aspartate 242 to proline 540 are catalytic. 3 residues coordinate Zn(2+): cysteine 336, histidine 387, and histidine 517.

Belongs to the class-II aminoacyl-tRNA synthetase family. Homodimer. The cofactor is Zn(2+).

It is found in the cytoplasm. The enzyme catalyses tRNA(Thr) + L-threonine + ATP = L-threonyl-tRNA(Thr) + AMP + diphosphate + H(+). Catalyzes the attachment of threonine to tRNA(Thr) in a two-step reaction: L-threonine is first activated by ATP to form Thr-AMP and then transferred to the acceptor end of tRNA(Thr). Also edits incorrectly charged L-seryl-tRNA(Thr). The polypeptide is Threonine--tRNA ligase (Staphylococcus saprophyticus subsp. saprophyticus (strain ATCC 15305 / DSM 20229 / NCIMB 8711 / NCTC 7292 / S-41)).